The following is a 452-amino-acid chain: Eukaryotic translation initiation factor 4B3 (452 aa).

Ala2 bears the N-acetylalanine mark. Residues 20–282 are disordered; sequence EEHEAELKQQ…PSGGSRPRLV (263 aa). Polar residues predominate over residues 28–37; that stretch reads QQPSPTNQKS. Over residues 98–110 the composition is skewed to basic and acidic residues; that stretch reads PRERSAEELDRSK. The span at 111 to 122 shows a compositional bias: gly residues; it reads LGGGFRSYGGGR. The segment covering 126–136 has biased composition (low complexity); the sequence is ESSSSRWGSSR. Residues 137 to 156 are compositionally biased toward basic and acidic residues; the sequence is VSEDGERRGGGFNRDREPSR. 2 consecutive short sequence motifs (nuclear localization signal) follow at residues 172–179 and 215–222; these read AKKPISGN and PRRFVSSN. Residues 227-243 are compositionally biased toward basic and acidic residues; sequence DRFEKRGSFESLSRNRD. Phosphoserine is present on residues Ser234, Ser270, and Ser300. Residues 265 to 280 are compositionally biased toward low complexity; sequence GAANGSPPPSGGSRPR. The disordered stretch occupies residues 349–452; it reads AAMEKPNEKS…AKKEETEDKI (104 aa). The span at 369-386 shows a compositional bias: basic and acidic residues; the sequence is GRKDEERIERSWRKSTEH. Positions 387–397 are enriched in acidic residues; that stretch reads SEEDAQEEEPA. Composition is skewed to basic and acidic residues over residues 400-419 and 441-452; these read GAKKEETEDKPAVEEAKKEE and EEAKKEETEDKI.

It belongs to the eIF-4 subunit B family. As to quaternary structure, homodimer. Nonspherical monomer. mRNA-discriminating component of initiation complexes. Interacts with MAD2. Phosphorylated.

The protein resides in the nucleus. Promotes the eIF4F and eIF4A RNA-dependent ATP-hydrolysis activity with different efficiency depending on mRNAs, thus providing mRNA discrimination during initiation of translation. The sequence is that of Eukaryotic translation initiation factor 4B3 from Arabidopsis thaliana (Mouse-ear cress).